The following is a 345-amino-acid chain: Selenide, water dikinase (345 aa).

The active site involves Cys15. Residues Lys18 and 46–48 (SKD) each bind ATP. Asp49 serves as a coordination point for Mg(2+). Residues Asp66, Asp89, and 137–139 (GHS) contribute to the ATP site. Mg(2+) is bound at residue Asp89. Asp225 is a Mg(2+) binding site.

The protein belongs to the selenophosphate synthase 1 family. Class I subfamily. Homodimer. It depends on Mg(2+) as a cofactor.

The enzyme catalyses hydrogenselenide + ATP + H2O = selenophosphate + AMP + phosphate + 2 H(+). In terms of biological role, synthesizes selenophosphate from selenide and ATP. The protein is Selenide, water dikinase of Aeromonas salmonicida (strain A449).